Consider the following 354-residue polypeptide: Ribosomal RNA large subunit methyltransferase M (354 aa).

S-adenosyl-L-methionine contacts are provided by residues Ser183, 216 to 219 (SPGG), Asp235, Asp255, and Asp271. The active-site Proton acceptor is the Lys300.

Belongs to the class I-like SAM-binding methyltransferase superfamily. RNA methyltransferase RlmE family. RlmM subfamily. As to quaternary structure, monomer.

Its subcellular location is the cytoplasm. It catalyses the reaction cytidine(2498) in 23S rRNA + S-adenosyl-L-methionine = 2'-O-methylcytidine(2498) in 23S rRNA + S-adenosyl-L-homocysteine + H(+). Functionally, catalyzes the 2'-O-methylation at nucleotide C2498 in 23S rRNA. The protein is Ribosomal RNA large subunit methyltransferase M of Pseudomonas putida (strain ATCC 700007 / DSM 6899 / JCM 31910 / BCRC 17059 / LMG 24140 / F1).